The sequence spans 892 residues: DNA mismatch repair protein MutS (892 aa).

634 to 641 (GPNMGGKS) contributes to the ATP binding site.

Belongs to the DNA mismatch repair MutS family.

Functionally, this protein is involved in the repair of mismatches in DNA. It is possible that it carries out the mismatch recognition step. This protein has a weak ATPase activity. In Paraburkholderia phymatum (strain DSM 17167 / CIP 108236 / LMG 21445 / STM815) (Burkholderia phymatum), this protein is DNA mismatch repair protein MutS.